Reading from the N-terminus, the 341-residue chain is Cell wall mannoprotein PIR1 (341 aa).

Positions 1–18 are cleaved as a signal peptide; sequence MQYKKSLVASALVATSLA. A propeptide spanning residues 19-63 is cleaved from the precursor; sequence AYAPKDPWSTLTPSATYKGGITDYSSTFGIAVEPIATTASSKAKR. 8 PIR1/2/3 repeats span residues 64–82, 83–101, 102–125, 126–144, 145–163, 164–182, 183–201, and 202–220; these read AAAI…TKTT, AAAV…TKTK, AAAV…AKTT, AAAV…TKTT, AAAV…TNTT, and VAPV…TLTS.

Belongs to the PIR protein family. Post-translationally, covalently linked to beta-1,3-glucan of the inner cell wall layer via an alkali-sensitive ester linkage between the gamma-carboxyl group of glutamic acids, arising from specific glutamines within the PIR1/2/3 repeats, and hydroxyl groups of glucoses of beta-1,3-glucan chains. O-glycosylated. Extensively O-mannosylated.

It is found in the secreted. It localises to the cell wall. In terms of biological role, component of the outer cell wall layer. Required for stability of the cell wall and for optimal growth. Required for resistance against several antifungal and cell wall-perturbing agents and for tolerance to heat shock. This is Cell wall mannoprotein PIR1 (PIR1) from Saccharomyces cerevisiae (strain ATCC 204508 / S288c) (Baker's yeast).